We begin with the raw amino-acid sequence, 407 residues long: Probable protein S-acyltransferase 9 (407 aa).

The next 2 helical transmembrane spans lie at 28–48 and 62–82; these read WSIP…SVFV and GHVF…LLFL. The 44-residue stretch at 136–179 folds into the DHHC domain; the sequence is KYCDTCMLYRPPRCSHCSICNNCVERFDHHCPWRNYRYFFMFVS. Catalysis depends on C166, which acts as the S-palmitoyl cysteine intermediate. 2 consecutive transmembrane segments (helical) span residues 174-194 and 217-237; these read FFMF…MSAL and AVML…LTGF. The disordered stretch occupies residues 300 to 407; the sequence is LATTWERPEE…RSYAAAEEGR (108 aa). The span at 346 to 356 shows a compositional bias: basic and acidic residues; it reads DTAHHKIDIDQ.

The protein belongs to the DHHC palmitoyltransferase family. Mainly expressed in seeds.

The protein resides in the cell membrane. The catalysed reaction is L-cysteinyl-[protein] + hexadecanoyl-CoA = S-hexadecanoyl-L-cysteinyl-[protein] + CoA. Palmitoyl acyltransferase. This is Probable protein S-acyltransferase 9 (PAT09) from Arabidopsis thaliana (Mouse-ear cress).